We begin with the raw amino-acid sequence, 358 residues long: Serine/threonine-protein phosphatase 2A activator 2 (358 aa).

Belongs to the PTPA-type PPIase family.

Its subcellular location is the cytoplasm. The catalysed reaction is [protein]-peptidylproline (omega=180) = [protein]-peptidylproline (omega=0). Its function is as follows. PPIases accelerate the folding of proteins. It catalyzes the cis-trans isomerization of proline imidic peptide bonds in oligopeptides. Acts as a regulatory subunit for PP2A-like phosphatases modulating their activity or substrate specificity, probably by inducing a conformational change in the catalytic subunit, a direct target of the PPIase. Can reactivate inactive phosphatase PP2A-phosphatase methylesterase complexes (PP2Ai) in presence of ATP and Mg(2+) by dissociating the inactive form from the complex. This chain is Serine/threonine-protein phosphatase 2A activator 2 (RRD2), found in Candida glabrata (strain ATCC 2001 / BCRC 20586 / JCM 3761 / NBRC 0622 / NRRL Y-65 / CBS 138) (Yeast).